A 324-amino-acid polypeptide reads, in one-letter code: Glutathione synthetase (324 aa).

The ATP-grasp domain maps to 125-312 (EKLFTTTHFP…ISTIILDNLE (188 aa)). 152–209 (FIKTYKDIIIKPLHGMAGLSIFRIKEHDPNTSVIIETMTKYETIPCISQNYITDIQKG) contacts ATP. Positions 283 and 285 each coordinate Mg(2+).

The protein belongs to the prokaryotic GSH synthase family. The cofactor is Mg(2+). Mn(2+) serves as cofactor.

It catalyses the reaction gamma-L-glutamyl-L-cysteine + glycine + ATP = glutathione + ADP + phosphate + H(+). Its pathway is sulfur metabolism; glutathione biosynthesis; glutathione from L-cysteine and L-glutamate: step 2/2. This chain is Glutathione synthetase, found in Buchnera aphidicola subsp. Baizongia pistaciae (strain Bp).